Here is a 283-residue protein sequence, read N- to C-terminus: ATP phosphoribosyltransferase (283 aa).

Belongs to the ATP phosphoribosyltransferase family. Long subfamily. It depends on Mg(2+) as a cofactor.

It is found in the cytoplasm. The enzyme catalyses 1-(5-phospho-beta-D-ribosyl)-ATP + diphosphate = 5-phospho-alpha-D-ribose 1-diphosphate + ATP. The protein operates within amino-acid biosynthesis; L-histidine biosynthesis; L-histidine from 5-phospho-alpha-D-ribose 1-diphosphate: step 1/9. With respect to regulation, feedback inhibited by histidine. Its function is as follows. Catalyzes the condensation of ATP and 5-phosphoribose 1-diphosphate to form N'-(5'-phosphoribosyl)-ATP (PR-ATP). Has a crucial role in the pathway because the rate of histidine biosynthesis seems to be controlled primarily by regulation of HisG enzymatic activity. The sequence is that of ATP phosphoribosyltransferase from Bifidobacterium longum subsp. infantis (strain ATCC 15697 / DSM 20088 / JCM 1222 / NCTC 11817 / S12).